The primary structure comprises 496 residues: MHAKSLTELRAALDAKECSAVELAQHYLKRIDAARDLNAFVHVDAELTLAQAKAADAALANGEAGPLAGLPIAHKDVFVTRGWRSTAGSKMLANYASPFDATVVARLSAAGMVTLGKTNMDEFAMGSSNENSAFGPVKNPWDTSAVPGGSSGGSSAAVAARLAPAATGTDTGGSIRQPASFAGVTGIKPTYGRVSRYGMIAFASSLDQGGPMARSAADCALLLNAMAGFDERDSTSLERADEDYTRHLGKAWAAGGDAGKPLAGLRIGLPAEYFGAGLADDVRAAIDAALKTYEALGATLVPVSLPKTELSIPVYYVIAPAEASSNLSRFDGVRYGHRAAEYRDLLDMYKKSRAEGFGPEVKRRILVGTYVLSHGYYDAYYLQAQKIRRIIAQDFQEAFKSCDVIMGPASPTVAWDIGAKGDDPVQMYLADIYTLSVSLAGLPGMSVPCGFGAGANAKRPVGLQIIGNYFDEARMLQVADAFQRATDWHVQEPAGV.

Residues Lys75 and Ser150 each act as charge relay system in the active site. Ser174 acts as the Acyl-ester intermediate in catalysis.

This sequence belongs to the amidase family. GatA subfamily. As to quaternary structure, heterotrimer of A, B and C subunits.

It catalyses the reaction L-glutamyl-tRNA(Gln) + L-glutamine + ATP + H2O = L-glutaminyl-tRNA(Gln) + L-glutamate + ADP + phosphate + H(+). In terms of biological role, allows the formation of correctly charged Gln-tRNA(Gln) through the transamidation of misacylated Glu-tRNA(Gln) in organisms which lack glutaminyl-tRNA synthetase. The reaction takes place in the presence of glutamine and ATP through an activated gamma-phospho-Glu-tRNA(Gln). The protein is Glutamyl-tRNA(Gln) amidotransferase subunit A of Burkholderia pseudomallei (strain 1106a).